A 338-amino-acid polypeptide reads, in one-letter code: Ketol-acid reductoisomerase (NADP(+)) (338 aa).

The 181-residue stretch at 1-181 folds into the KARI N-terminal Rossmann domain; the sequence is MKVFYDKDAD…GGGRAGIIET (181 aa). NADP(+) contacts are provided by residues 24–27, Arg47, and Ser52; that span reads YGSQ. The active site involves His107. An NADP(+)-binding site is contributed by Gly133. The KARI C-terminal knotted domain occupies 182–327; that stretch reads NFREETETDL…EKLRAMMPWI (146 aa). Positions 190, 194, 226, and 230 each coordinate Mg(2+). Residue Ser251 coordinates substrate.

This sequence belongs to the ketol-acid reductoisomerase family. Requires Mg(2+) as cofactor.

The enzyme catalyses (2R)-2,3-dihydroxy-3-methylbutanoate + NADP(+) = (2S)-2-acetolactate + NADPH + H(+). It catalyses the reaction (2R,3R)-2,3-dihydroxy-3-methylpentanoate + NADP(+) = (S)-2-ethyl-2-hydroxy-3-oxobutanoate + NADPH + H(+). It functions in the pathway amino-acid biosynthesis; L-isoleucine biosynthesis; L-isoleucine from 2-oxobutanoate: step 2/4. The protein operates within amino-acid biosynthesis; L-valine biosynthesis; L-valine from pyruvate: step 2/4. Its function is as follows. Involved in the biosynthesis of branched-chain amino acids (BCAA). Catalyzes an alkyl-migration followed by a ketol-acid reduction of (S)-2-acetolactate (S2AL) to yield (R)-2,3-dihydroxy-isovalerate. In the isomerase reaction, S2AL is rearranged via a Mg-dependent methyl migration to produce 3-hydroxy-3-methyl-2-ketobutyrate (HMKB). In the reductase reaction, this 2-ketoacid undergoes a metal-dependent reduction by NADPH to yield (R)-2,3-dihydroxy-isovalerate. The sequence is that of Ketol-acid reductoisomerase (NADP(+)) from Cupriavidus taiwanensis (strain DSM 17343 / BCRC 17206 / CCUG 44338 / CIP 107171 / LMG 19424 / R1) (Ralstonia taiwanensis (strain LMG 19424)).